The following is a 320-amino-acid chain: Putative fatty acid elongase 3 (320 aa).

A glycan (N-linked (GlcNAc...) asparagine) is linked at N14. 6 helical membrane passes run 33-53, 67-87, 120-140, 145-165, 203-223, and 242-262; these read WMQNHWYQSITASVVYVAVIF, LDTPLFVWNSFLAIFSILGFL, FWTEQFAMSKLFELIDTIFIV, PLIFLHWYHHVTVMIYTWHAY, MAMVVTTLQLAQMVMGVIIGV, and LGLCFGVYFTYFLLFANFFYH.

The protein belongs to the ELO family.

Its subcellular location is the membrane. It carries out the reaction a very-long-chain acyl-CoA + malonyl-CoA + H(+) = a very-long-chain 3-oxoacyl-CoA + CO2 + CoA. It functions in the pathway lipid metabolism; fatty acid biosynthesis. Could be implicated in synthesis of very long chain fatty acids. May be required for normally rapid growth. This chain is Putative fatty acid elongase 3 (elo-3), found in Caenorhabditis elegans.